The following is a 490-amino-acid chain: Transcriptional activator/repressor MOT3 (490 aa).

The residue at position 1 (Met1) is an N-acetylmethionine. Disordered regions lie at residues 1 to 69, 101 to 162, and 214 to 267; these read MNAD…NKDD, NNNN…HPNQ, and NNGN…PQHH. Over residues 8–36 the composition is skewed to low complexity; sequence QQQQQQRQQHQQQQHQQQQHQHQHQQQQH. A compositionally biased stretch (polar residues) spans 37-65; that stretch reads TILQNVSNTNNIGSDSLASQPFNTTTVSS. Residues 98-295 are prion domain (PrD); the sequence is NNSNNNNVTA…NLNLNINPAQ (198 aa). 4 stretches are compositionally biased toward low complexity: residues 119–128, 138–157, 214–232, and 248–264; these read NNSNNSNNSN, NNSTSNNNNNNNNNNNNNNN, NNGNNAANNGSNNSSHSAP, and THNNLNNGGAVNTNNAP. 2 consecutive C2H2-type zinc fingers follow at residues 346-368 and 374-397; these read HQCQFCEKSFKRKSWLKRHLLSH and FLCPWCLSRQKRKDNLLQHMKLKH. The span at 421-436 shows a compositional bias: low complexity; it reads NNNNDNNNNNNSNSAS. Residues 421–458 are disordered; it reads NNNNDNNNNNNSNSASGSGGAGAAAAAATAPENEDGNG.

The protein resides in the nucleus. In terms of biological role, transcription factor that affects the expression of a large set of genes. Recognizes and binds to the consensus sequence 5'-[CAT]AGG[TC]A-3' in the promoter region. Plays a major role in the repression of a specific subset of hypoxic genes (e.g. ANB1, DAN1 and HEM13) under aerobic conditions. Acts synergistically with the transcription factor ROX1 to recruit the general repression complex SSN6-TUP1 to the promoter of hypoxic genes. Represses transcription of ergosterol biosynthetic genes. Negatively regulates pheromone-induced gene expression. Can act as a transcriptional activator (e.g. of genes like CYC1, SUC2 and the Ty long terminal repeat delta promoter). The chain is Transcriptional activator/repressor MOT3 (MOT3) from Saccharomyces cerevisiae (strain ATCC 204508 / S288c) (Baker's yeast).